An 899-amino-acid polypeptide reads, in one-letter code: Protein suppressor of hairy wing (899 aa).

3 disordered regions span residues 1-33, 45-127, and 171-206; these read MSAQ…RTGT, AAVA…KKMD, and AKEN…AKRR. Over residues 21–31 the composition is skewed to basic and acidic residues; it reads SDGDKPKEKRT. Positions 45–55 are enriched in low complexity; sequence AAVASKGASVS. 2 stretches are compositionally biased toward polar residues: residues 67 to 83 and 102 to 111; these read KILN…STKG and RSSAPASSAV. Residues 183–198 show a composition bias toward acidic residues; that stretch reads VDEDDDDDDDDEDEGV. A C2H2-type 1; atypical zinc finger spans residues 218 to 240; sequence HVCGKCYKTFRRVKSLKKHLEFC. The segment at 288 to 311 adopts a C2H2-type 2 zinc-finger fold; the sequence is INCPDCPKSFKTQTSYERHIFITH. The segment at 318–340 adopts a C2H2-type 3; atypical zinc-finger fold; sequence YPCSICNAKLRSGALLKLHEQQH. 9 consecutive C2H2-type zinc fingers follow at residues 347–365, 379–401, 412–434, 440–462, 468–490, 496–518, 522–544, 552–576, and 594–617; these read FACK…LKCH, MSCK…LKQH, YMCH…IRTH, FDCD…RRYH, YTCT…MKRH, HKCN…SKTH, YACS…VKDH, FACT…AGDH, and TDCA…RSVH. Disordered stretches follow at residues 646–665, 702–734, and 865–899; these read EQKE…GSLI, PLEG…VVKK, and GDED…ESEA. Over residues 874 to 899 the composition is skewed to basic and acidic residues; that stretch reads ETDKGKDREADNTDTDTREDAVESEA.

It is found in the nucleus. Its function is as follows. Component of the gypsy chromatin insulator complex which is required for the function of the gypsy chromatin insulator and other endogenous chromatin insulators. Chromatin insulators are regulatory elements which establish independent domains of transcriptional activity within eukaryotic genomes. Insulators have two defining properties; they can block the communication between an enhancer and a promoter when placed between them and can also buffer transgenes from position effect variegation (PEV). Insulators are proposed to structure the chromatin fiber into independent domains of differing transcriptional potential by promoting the formation of distinct chromatin loops. This chromatin looping may involve the formation of insulator bodies, where homotypic interactions between individual subunits of the insulator complex could promote the clustering of widely spaced insulators at the nuclear periphery. Within the gypsy insulator complex, this protein binds specifically to a region of the gypsy element located 3' of the 5' long terminal repeat (LTR), and may also mediate interaction with other endogenous insulators at sites distinct from those recognized by Cp190. Cooperates with pita and cliff to recruit Cp190 and regulate insulator function at the front-ultraabdominal (Fub) boundary. In Drosophila virilis (Fruit fly), this protein is Protein suppressor of hairy wing (su(Hw)).